Consider the following 288-residue polypeptide: Shikimate dehydrogenase (NADP(+)) (288 aa).

Residues 22–24 and Thr69 each bind shikimate; that span reads SLS. Lys73 (proton acceptor) is an active-site residue. The shikimate site is built by Asn94 and Asp110. Residues 131 to 135 and Leu228 each bind NADP(+); that span reads GSGGA. Tyr230 is a binding site for shikimate. Gly251 lines the NADP(+) pocket.

The protein belongs to the shikimate dehydrogenase family. As to quaternary structure, homodimer.

The enzyme catalyses shikimate + NADP(+) = 3-dehydroshikimate + NADPH + H(+). It functions in the pathway metabolic intermediate biosynthesis; chorismate biosynthesis; chorismate from D-erythrose 4-phosphate and phosphoenolpyruvate: step 4/7. In terms of biological role, involved in the biosynthesis of the chorismate, which leads to the biosynthesis of aromatic amino acids. Catalyzes the reversible NADPH linked reduction of 3-dehydroshikimate (DHSA) to yield shikimate (SA). This Synechococcus sp. (strain JA-2-3B'a(2-13)) (Cyanobacteria bacterium Yellowstone B-Prime) protein is Shikimate dehydrogenase (NADP(+)).